The primary structure comprises 141 residues: Large ribosomal subunit protein uL13 (141 aa).

The protein belongs to the universal ribosomal protein uL13 family. As to quaternary structure, part of the 50S ribosomal subunit.

This protein is one of the early assembly proteins of the 50S ribosomal subunit, although it is not seen to bind rRNA by itself. It is important during the early stages of 50S assembly. This is Large ribosomal subunit protein uL13 from Helicobacter pylori (strain Shi470).